A 212-amino-acid polypeptide reads, in one-letter code: Deoxyribose-phosphate aldolase (212 aa).

D89 acts as the Proton donor/acceptor in catalysis. Residue K151 is the Schiff-base intermediate with acetaldehyde of the active site. K180 serves as the catalytic Proton donor/acceptor.

This sequence belongs to the DeoC/FbaB aldolase family. DeoC type 1 subfamily.

It is found in the cytoplasm. The catalysed reaction is 2-deoxy-D-ribose 5-phosphate = D-glyceraldehyde 3-phosphate + acetaldehyde. Its pathway is carbohydrate degradation; 2-deoxy-D-ribose 1-phosphate degradation; D-glyceraldehyde 3-phosphate and acetaldehyde from 2-deoxy-alpha-D-ribose 1-phosphate: step 2/2. Catalyzes a reversible aldol reaction between acetaldehyde and D-glyceraldehyde 3-phosphate to generate 2-deoxy-D-ribose 5-phosphate. This is Deoxyribose-phosphate aldolase from Clostridium botulinum (strain Kyoto / Type A2).